A 399-amino-acid polypeptide reads, in one-letter code: Elongation factor Tu (399 aa).

The region spanning 10-204 (KPHVNIGTIG…AVDASIPEPE (195 aa)) is the tr-type G domain. Residues 19–26 (GHVDHGKT) form a G1 region. GTP is bound at residue 19 to 26 (GHVDHGKT). T26 contacts Mg(2+). The interval 60-64 (GITIN) is G2. The interval 81 to 84 (DCPG) is G3. GTP contacts are provided by residues 81–85 (DCPGH) and 136–139 (NKCD). Residues 136-139 (NKCD) form a G4 region. Residues 174 to 176 (SGL) form a G5 region.

Belongs to the TRAFAC class translation factor GTPase superfamily. Classic translation factor GTPase family. EF-Tu/EF-1A subfamily. In terms of assembly, monomer.

Its subcellular location is the cytoplasm. It carries out the reaction GTP + H2O = GDP + phosphate + H(+). Its function is as follows. GTP hydrolase that promotes the GTP-dependent binding of aminoacyl-tRNA to the A-site of ribosomes during protein biosynthesis. The chain is Elongation factor Tu from Synechococcus sp. (strain CC9311).